We begin with the raw amino-acid sequence, 266 residues long: Proline-rich protein 23A (266 aa).

Low complexity predominate over residues 1 to 18 (MGSRPRSPSAFPAPWWGQ). Disordered stretches follow at residues 1 to 47 (MGSR…SLED) and 197 to 266 (EPCA…LFQE). Positions 227–238 (PSSPLQPLPPSP) are enriched in pro residues. A compositionally biased stretch (basic residues) spans 255 to 266 (PPCKARRRLFQE).

It belongs to the PRR23 family.

This Homo sapiens (Human) protein is Proline-rich protein 23A (PRR23A).